Reading from the N-terminus, the 265-residue chain is tRNA (guanine-N(7)-)-methyltransferase (265 aa).

Glu-96, Glu-121, Asp-148, and Asp-170 together coordinate S-adenosyl-L-methionine. Residue Asp-170 is part of the active site. 2 residues coordinate substrate: Lys-174 and Asp-206.

The protein belongs to the class I-like SAM-binding methyltransferase superfamily. TrmB family.

The enzyme catalyses guanosine(46) in tRNA + S-adenosyl-L-methionine = N(7)-methylguanosine(46) in tRNA + S-adenosyl-L-homocysteine. It functions in the pathway tRNA modification; N(7)-methylguanine-tRNA biosynthesis. Catalyzes the formation of N(7)-methylguanine at position 46 (m7G46) in tRNA. In Rhodopseudomonas palustris (strain ATCC BAA-98 / CGA009), this protein is tRNA (guanine-N(7)-)-methyltransferase.